The sequence spans 480 residues: Membrane-bound lytic murein transglycosylase F (480 aa).

A signal peptide spans 1 to 15 (MNRILLTLLTLTLLA). The non-LT domain stretch occupies residues 16 to 259 (GCQRVAVEET…HLDEKYFAHV (244 aa)). The segment at 260 to 480 (KRFDYVDTRA…EKAITGAQPE (221 aa)) is LT domain. E304 is a catalytic residue.

This sequence in the N-terminal section; belongs to the bacterial solute-binding protein 3 family. It in the C-terminal section; belongs to the transglycosylase Slt family.

The protein localises to the cell outer membrane. It carries out the reaction Exolytic cleavage of the (1-&gt;4)-beta-glycosidic linkage between N-acetylmuramic acid (MurNAc) and N-acetylglucosamine (GlcNAc) residues in peptidoglycan, from either the reducing or the non-reducing ends of the peptidoglycan chains, with concomitant formation of a 1,6-anhydrobond in the MurNAc residue.. Functionally, murein-degrading enzyme that degrades murein glycan strands and insoluble, high-molecular weight murein sacculi, with the concomitant formation of a 1,6-anhydromuramoyl product. Lytic transglycosylases (LTs) play an integral role in the metabolism of the peptidoglycan (PG) sacculus. Their lytic action creates space within the PG sacculus to allow for its expansion as well as for the insertion of various structures such as secretion systems and flagella. The sequence is that of Membrane-bound lytic murein transglycosylase F from Shewanella woodyi (strain ATCC 51908 / MS32).